Here is a 208-residue protein sequence, read N- to C-terminus: FMN-dependent NADH:quinone oxidoreductase 1 (208 aa).

Position 17–19 (17–19 (SVS)) interacts with FMN.

This sequence belongs to the azoreductase type 1 family. In terms of assembly, homodimer. Requires FMN as cofactor.

It carries out the reaction 2 a quinone + NADH + H(+) = 2 a 1,4-benzosemiquinone + NAD(+). It catalyses the reaction N,N-dimethyl-1,4-phenylenediamine + anthranilate + 2 NAD(+) = 2-(4-dimethylaminophenyl)diazenylbenzoate + 2 NADH + 2 H(+). In terms of biological role, quinone reductase that provides resistance to thiol-specific stress caused by electrophilic quinones. Its function is as follows. Also exhibits azoreductase activity. Catalyzes the reductive cleavage of the azo bond in aromatic azo compounds to the corresponding amines. The chain is FMN-dependent NADH:quinone oxidoreductase 1 from Listeria innocua serovar 6a (strain ATCC BAA-680 / CLIP 11262).